The chain runs to 728 residues: Plakophilin-1 (728 aa).

The segment at 1–235 is required for binding to single stranded DNA; it reads MNHSPLKTAL…SFGHSRASSK (235 aa). The interval 1 to 287 is required for interaction with EIF4A1; that stretch reads MNHSPLKTAL…ESAKQQVYQL (287 aa). Ser4 carries the phosphoserine; by RIPK4 modification. The disordered stretch occupies residues 48–69; the sequence is TVKRQKSKSSQSSTLSHSNRGS. 2 phosphorylation in this region is required for cytoplasmic localization and protein stabilization regions span residues 54 to 69 and 117 to 192; these read SKSSQSSTLSHSNRGS and RFSS…STCS. The residue at position 119 (Ser119) is a Phosphoserine. Ser120 is subject to Phosphoserine; by RIPK4. Ser122 is modified (phosphoserine). Ser143 is subject to Phosphoserine; by RIPK4. The tract at residues 161 to 270 is required for WNT-mediated nuclear localization; sequence YCDPRGTLRK…KYQAIGAYYI (110 aa). ARM repeat units lie at residues 244–275, 276–317, 318–360, 361–412, 413–443, 505–536, 537–583, 584–629, and 630–694; these read SGLTIPKAVQYLCSQDEKYQAIGAYYIQHTCF, QDES…NLVF, RSTP…NLSS, TDEL…GCLR, NLSSADAGRQTMRNYSGLIDSLMAYVQNCVA, NYDCPLPEEETNPKGSSWLYHSDAIRTYLNLM, GKSK…IARL, LQSG…SHTG, and NTSN…DMWA.

Belongs to the beta-catenin family. In terms of assembly, part of a complex that contains DSG3, PKP1, YAP1 and YWHAG; the complex is required for localization of DSG3 and YAP1 to the cell membrane in keratinocytes. Interacts (via N-terminus) with KRT5/CK5, KRT8/CK8 (via rod domain), KRT15/CK15 and KRT18/CK18 (via rod domain) as part of intermediate filaments. Interacts with VIM (via rod domain). Interacts with DSP. Interacts with DES. Interacts with FXR1; the interaction may facilitate the binding of PKP1 to PKP2, PKP3 and DSP mRNA. Interacts (via N-terminus) with EIF4A1; the interaction promotes EIF4A1 recruitment to the cap-dependent translation complex and EIF4A1 ATPase activity. Interacts with TJP1/ZO-1; the interaction facilitates TJP1/ZO-1 localization to the plasma membrane. Interacts (when phosphorylated) with YWHAG; the interaction results in translocation of PKP1 to the cytoplasm and loss of intercellular adhesion in keratinocytes. Phosphorylated by AKT2; required for interaction with YWHAG and subsequent localization away from desmosomes to the cytoplasm. Phosphorylation of Ser-119 by AKT2 promotes PKP1-driven cap-dependent mRNA translation and decreases intercellular adhesion, phosphorylation is promoted by insulin. Phosphorylation by RIPK4 at the N-terminus is required for its role in differentiation of keratinocytes and DSG1 localization at cell junctions. In terms of tissue distribution, expressed in undifferentiated keratinocytes of the epidermis at birth, expression increases as differentiation proceeds (at protein level). Expressed in the cervical loop during early tooth differentiation, expression is then present between ameloblasts, at ameloblast-ameloblast junctions and in the stratum intermedium during pre-secretory and secretory stages of tooth development (at protein level).

The protein localises to the nucleus. Its subcellular location is the cytoplasm. The protein resides in the perinuclear region. It localises to the cell junction. It is found in the desmosome. The protein localises to the cell membrane. Its subcellular location is the stress granule. Its function is as follows. A component of desmosome cell-cell junctions which are required for positive regulation of cellular adhesion. Plays a role in desmosome protein expression regulation and localization to the desmosomal plaque, thereby maintaining cell sheet integrity and anchorage of desmosomes to intermediate filaments. Required for localization of DSG3 and YAP1 to the cell membrane in keratinocytes in response to mechanical strain, via the formation of an interaction complex composed of DSG3, YAP1, PKP1 and YWHAG. Positively regulates differentiation of keratinocytes, potentially via promoting localization of DSG1 at desmosome cell junctions. Required for calcium-independent development and maturation of desmosome plaques specifically at lateral cell-cell contacts in differentiating keratinocytes. Plays a role in the maintenance of DSG3 protein abundance, DSG3 clustering and localization of these clusters to the cell membrane in keratinocytes. May also promote keratinocyte proliferation and morphogenesis during postnatal development. Required for tight junction inside-out transepidermal barrier function of the skin, and is thereby involved in neonatal survival possibly via maintenance of hydration levels. Promotes Wnt-mediated proliferation and differentiation of ameloblasts, via facilitating TJP1/ZO-1 localization to tight junctions. Binds single-stranded DNA (ssDNA), and may thereby play a role in sensing DNA damage and promoting cell survival. Positively regulates cap-dependent translation and as a result cell proliferation, via recruitment of EIF4A1 to the initiation complex and promotion of EIF4A1 ATPase activity. Regulates the mRNA stability and protein abundance of desmosome components PKP2, PKP3, DSC2 and DSP, potentially via its interaction with FXR1. The sequence is that of Plakophilin-1 (Pkp1) from Mus musculus (Mouse).